Consider the following 466-residue polypeptide: Histidinol dehydrogenase, chloroplastic (466 aa).

Residues 1-30 (MSLNLSRLSLLSSPRISISTHAPRKGYVCC) constitute a chloroplast transit peptide. The NAD(+) site is built by Tyr155, Gln217, and Asn240. Substrate-binding residues include Ser266, Gln288, and His291. Gln288 and His291 together coordinate Zn(2+). Catalysis depends on proton acceptor residues Glu356 and His357. Residues His357, Asp390, Glu444, and His449 each contribute to the substrate site. Asp390 contacts Zn(2+). Residue His449 participates in Zn(2+) binding.

Belongs to the histidinol dehydrogenase family. It depends on Zn(2+) as a cofactor.

Its subcellular location is the plastid. The protein localises to the chloroplast. The enzyme catalyses L-histidinol + 2 NAD(+) + H2O = L-histidine + 2 NADH + 3 H(+). It participates in amino-acid biosynthesis; L-histidine biosynthesis; L-histidine from 5-phospho-alpha-D-ribose 1-diphosphate: step 9/9. Functionally, catalyzes the sequential NAD-dependent oxidations of L-histidinol to L-histidinaldehyde and then to L-histidine. This is Histidinol dehydrogenase, chloroplastic (HISN8) from Arabidopsis thaliana (Mouse-ear cress).